The following is a 652-amino-acid chain: Translation factor guf1, mitochondrial (652 aa).

The transit peptide at 1–44 (MSIFRLSRTFSLETCLKSSSFKIRWRFFSVSYASRKLASEDNKP) directs the protein to the mitochondrion. In terms of domain architecture, tr-type G spans 56–237 (NRVRNWAVIA…EIIQKIPPPK (182 aa)). GTP contacts are provided by residues 65–72 (AHIDHGKS), 130–134 (DTPGH), and 184–187 (NKVD).

This sequence belongs to the TRAFAC class translation factor GTPase superfamily. Classic translation factor GTPase family. LepA subfamily.

It is found in the mitochondrion inner membrane. The enzyme catalyses GTP + H2O = GDP + phosphate + H(+). Functionally, promotes mitochondrial protein synthesis. May act as a fidelity factor of the translation reaction, by catalyzing a one-codon backward translocation of tRNAs on improperly translocated ribosomes. Binds to mitochondrial ribosomes in a GTP-dependent manner. This is Translation factor guf1, mitochondrial (guf1) from Schizosaccharomyces pombe (strain 972 / ATCC 24843) (Fission yeast).